A 600-amino-acid polypeptide reads, in one-letter code: Probable tripeptidyl-peptidase SED4 (600 aa).

The first 22 residues, 1–22, serve as a signal peptide directing secretion; it reads MVSFTLRAIGACLIGLPALITA. A propeptide spans 23-202 (removed in mature form); it reads APTSHVSNGF…SVFTSDLEMT (180 aa). 2 N-linked (GlcNAc...) asparagine glycosylation sites follow: asparagine 210 and asparagine 281. The Peptidase S53 domain occupies 212 to 600; that stretch reads TITPDCIREL…FEKLSKLVLI (389 aa). Catalysis depends on charge relay system residues glutamate 288 and aspartate 292. N-linked (GlcNAc...) asparagine glycans are attached at residues asparagine 323 and asparagine 404. Catalysis depends on serine 504, which acts as the Charge relay system. Ca(2+) contacts are provided by aspartate 546, isoleucine 547, glycine 579, and aspartate 581.

Ca(2+) is required as a cofactor.

It localises to the secreted. The protein localises to the extracellular space. The catalysed reaction is Release of an N-terminal tripeptide from a polypeptide.. In terms of biological role, secreted tripeptidyl-peptidase which degrades proteins at acidic pHs and is involved in virulence. The chain is Probable tripeptidyl-peptidase SED4 (SED4) from Trichophyton verrucosum (strain HKI 0517).